Reading from the N-terminus, the 65-residue chain is UPF0337 protein BCE_1081 (65 aa).

A disordered region spans residues 1 to 28 (MSGGLKEQITGKVEKTKGQVKEGIGEVT). Residues 12-28 (KVEKTKGQVKEGIGEVT) are compositionally biased toward basic and acidic residues.

It belongs to the UPF0337 (CsbD) family.

This chain is UPF0337 protein BCE_1081, found in Bacillus cereus (strain ATCC 10987 / NRS 248).